The sequence spans 1188 residues: DNA-directed RNA polymerase subunit beta (1188 aa).

This sequence belongs to the RNA polymerase beta chain family. In terms of assembly, the RNAP catalytic core consists of 2 alpha, 1 beta, 1 beta' and 1 omega subunit. When a sigma factor is associated with the core the holoenzyme is formed, which can initiate transcription.

The enzyme catalyses RNA(n) + a ribonucleoside 5'-triphosphate = RNA(n+1) + diphosphate. In terms of biological role, DNA-dependent RNA polymerase catalyzes the transcription of DNA into RNA using the four ribonucleoside triphosphates as substrates. The sequence is that of DNA-directed RNA polymerase subunit beta from Streptococcus sanguinis (strain SK36).